Here is a 465-residue protein sequence, read N- to C-terminus: Cysteine--tRNA ligase (465 aa).

C27 provides a ligand contact to Zn(2+). Residues P29–N39 carry the 'HIGH' region motif. The Zn(2+) site is built by C207, H232, and E236. The short motif at K264–S268 is the 'KMSKS' region element. ATP is bound at residue K267.

Belongs to the class-I aminoacyl-tRNA synthetase family. Monomer. It depends on Zn(2+) as a cofactor.

It is found in the cytoplasm. It carries out the reaction tRNA(Cys) + L-cysteine + ATP = L-cysteinyl-tRNA(Cys) + AMP + diphosphate. This is Cysteine--tRNA ligase from Clostridium botulinum (strain ATCC 19397 / Type A).